Reading from the N-terminus, the 393-residue chain is MTRIGTPLSPTATRVLLCGCGELGKEVVIELQRLGVEVIAVDRYANAPAMQVAHRSHVVNMLDGVALRAVIEAEKPHYIVPEIEAIATATLVELENEGFNVVPTARATQLTMNREGIRRLAAEELDLPTSPYHFADTFEDYAKAVADVGYPCVVKPVMSSSGKGQSLLRSDADLQKSWDYAQEGGRAGKGRVIVEGFIDFEYEITLLTVRHVGGTTFLEPVGHRQEKGDYQESWQPQAMSPKALAESQRVAKAVTDALGGRGLFGVELFVKGDQVWFSEVSPRPHDTGLVTLISQDLSQFALHARAILGLPIPVVRQFGPSASAVILPEGQSQQTSFANLGAALSEPDTAIRLFGKPEINGTRRMGVCLARDESVELARAKATRASQAVKVEF.

N(1)-(5-phospho-beta-D-ribosyl)glycinamide is bound by residues 22–23 (EL) and Glu82. ATP contacts are provided by residues Arg114, Lys155, 160–165 (SSGKGQ), 195–198 (EGFI), and Glu203. The region spanning 119–308 (RLAAEELDLP…QFALHARAIL (190 aa)) is the ATP-grasp domain. Mg(2+) contacts are provided by Glu267 and Glu279. N(1)-(5-phospho-beta-D-ribosyl)glycinamide contacts are provided by residues Asp286, Lys356, and 363–364 (RR).

The protein belongs to the PurK/PurT family. Homodimer.

The catalysed reaction is N(1)-(5-phospho-beta-D-ribosyl)glycinamide + formate + ATP = N(2)-formyl-N(1)-(5-phospho-beta-D-ribosyl)glycinamide + ADP + phosphate + H(+). The protein operates within purine metabolism; IMP biosynthesis via de novo pathway; N(2)-formyl-N(1)-(5-phospho-D-ribosyl)glycinamide from N(1)-(5-phospho-D-ribosyl)glycinamide (formate route): step 1/1. Involved in the de novo purine biosynthesis. Catalyzes the transfer of formate to 5-phospho-ribosyl-glycinamide (GAR), producing 5-phospho-ribosyl-N-formylglycinamide (FGAR). Formate is provided by PurU via hydrolysis of 10-formyl-tetrahydrofolate. In Pseudomonas putida (strain GB-1), this protein is Formate-dependent phosphoribosylglycinamide formyltransferase.